The sequence spans 207 residues: Adenylyl-sulfate kinase (207 aa).

34 to 41 lines the ATP pocket; sequence GLSGSGKS. The active-site Phosphoserine intermediate is Ser108.

This sequence belongs to the APS kinase family.

It carries out the reaction adenosine 5'-phosphosulfate + ATP = 3'-phosphoadenylyl sulfate + ADP + H(+). It participates in sulfur metabolism; hydrogen sulfide biosynthesis; sulfite from sulfate: step 2/3. In terms of biological role, catalyzes the synthesis of activated sulfate. The chain is Adenylyl-sulfate kinase from Lactiplantibacillus plantarum (strain ATCC BAA-793 / NCIMB 8826 / WCFS1) (Lactobacillus plantarum).